The following is a 519-amino-acid chain: Cytochrome P450 52-E3 (519 aa).

A helical membrane pass occupies residues 10 to 30; it reads VLGGISVSFLLAYQAIYFYFI. Cys-461 lines the heme pocket.

This sequence belongs to the cytochrome P450 family. Heme serves as cofactor.

The protein resides in the membrane. It carries out the reaction an omega-methyl-long-chain fatty acid + reduced [NADPH--hemoprotein reductase] + O2 = an omega-hydroxy-long-chain fatty acid + oxidized [NADPH--hemoprotein reductase] + H2O + H(+). The catalysed reaction is (9Z)-octadecenoate + reduced [NADPH--hemoprotein reductase] + O2 = 18-hydroxy-(9Z)-octadecenoate + oxidized [NADPH--hemoprotein reductase] + H2O + H(+). It catalyses the reaction hexadecanoate + reduced [NADPH--hemoprotein reductase] + O2 = 16-hydroxyhexadecanoate + oxidized [NADPH--hemoprotein reductase] + H2O + H(+). The enzyme catalyses (9Z)-hexadecenoate + reduced [NADPH--hemoprotein reductase] + O2 = (9Z)-16-hydroxyhexadec-9-enoate + oxidized [NADPH--hemoprotein reductase] + H2O + H(+). Functionally, catalyzes the terminal (at the omega-position) hydroxylation of a fatty acid. Probably involved in alkane metabolism. Has minor activity toward myristic acid, palmitic acid, palmitoleic acid and oleic acid. The sequence is that of Cytochrome P450 52-E3 from Starmerella bombicola (Yeast).